The sequence spans 489 residues: Probable apyrase 1 (489 aa).

Topologically, residues 1-28 (MRRFSAAAGARQQQQQGEAVSDRVLRFR) are cytoplasmic. The chain crosses the membrane as a helical; Signal-anchor for type II membrane protein span at residues 29-49 (GVLVVVLAPVLLISLVLLLMP). Topologically, residues 50-489 (RAPASATVEG…GSAIEVASSS (440 aa)) are extracellular. 89-99 (VIFDAGSSGSR) contacts ATP. Catalysis depends on glutamate 211, which acts as the Proton acceptor. 235-245 (GVVDLGGGSVQ) is a binding site for ATP.

The protein belongs to the GDA1/CD39 NTPase family. Ca(2+) serves as cofactor.

The protein localises to the membrane. It catalyses the reaction a ribonucleoside 5'-triphosphate + 2 H2O = a ribonucleoside 5'-phosphate + 2 phosphate + 2 H(+). Its function is as follows. Catalyzes the hydrolysis of phosphoanhydride bonds of nucleoside tri- and di-phosphates. The protein is Probable apyrase 1 (APY1) of Oryza sativa subsp. japonica (Rice).